A 404-amino-acid polypeptide reads, in one-letter code: Ubiquitin-like modifier-activating enzyme 5 (404 aa).

5 residues coordinate ATP: G83, D104, K127, N150, and N184. Positions 226 and 229 each coordinate Zn(2+). C250 acts as the Glycyl thioester intermediate in catalysis. Zn(2+) contacts are provided by C303 and C308. A disordered region spans residues 372 to 393 (APEKSSETSEETVTAATADETS). Residues 382–391 (ETVTAATADE) are compositionally biased toward low complexity.

It belongs to the ubiquitin-activating E1 family. UBA5 subfamily.

Its function is as follows. E1-like enzyme which activates UFM1. The sequence is that of Ubiquitin-like modifier-activating enzyme 5 from Drosophila sechellia (Fruit fly).